Reading from the N-terminus, the 198-residue chain is UPF0314 protein Saro_1818 (198 aa).

5 helical membrane-spanning segments follow: residues 13–33, 62–82, 96–116, 153–173, and 177–197; these read GGSL…LGMG, WYSF…HIVW, LALA…PIII, APVL…LWAI, and LALN…WQGG.

It belongs to the UPF0314 family.

It is found in the cell membrane. This Novosphingobium aromaticivorans (strain ATCC 700278 / DSM 12444 / CCUG 56034 / CIP 105152 / NBRC 16084 / F199) protein is UPF0314 protein Saro_1818.